The following is a 304-amino-acid chain: GS homeobox 2 (304 aa).

The segment at 116 to 151 (AQFCPRVNHAHHHHHPPQHHHHHHQPQQPGSAAAAA) is disordered. Residues 123–140 (NHAHHHHHPPQHHHHHHQ) are compositionally biased toward basic residues. Low complexity predominate over residues 141–151 (PQQPGSAAAAA). The homeobox DNA-binding region spans 202-261 (GKRMRTAFTSTQLLELEREFSSNMYLSRLRRIEIATYLNLSEKQVKIWFQNRRVKHKKEG). The tract at residues 283 to 304 (RSEDEDSLSPASANDDKEISPL) is disordered.

It belongs to the Antp homeobox family.

The protein resides in the nucleus. Its subcellular location is the cytoplasm. Functionally, transcription factor that binds 5'-CNAATTAG-3' DNA sequence and regulates the expression of numerous genes including genes important for brain development. During telencephalic development, causes ventralization of pallial progenitors and, depending on the developmental stage, specifies different neuronal fates. At early stages, necessary and sufficient to correctly specify the ventral lateral ganglionic eminence (LGE) and its major derivatives, the striatal projection neurons. At later stages, may specify LGE progenitors toward dorsal LGE fates, including olfactory bulb interneurons. This chain is GS homeobox 2 (GSX2), found in Homo sapiens (Human).